A 239-amino-acid polypeptide reads, in one-letter code: Ribonuclease PH (239 aa).

Phosphate contacts are provided by residues Arg-86 and Gly-124 to Arg-126.

The protein belongs to the RNase PH family. As to quaternary structure, homohexameric ring arranged as a trimer of dimers.

It carries out the reaction tRNA(n+1) + phosphate = tRNA(n) + a ribonucleoside 5'-diphosphate. Its function is as follows. Phosphorolytic 3'-5' exoribonuclease that plays an important role in tRNA 3'-end maturation. Removes nucleotide residues following the 3'-CCA terminus of tRNAs; can also add nucleotides to the ends of RNA molecules by using nucleoside diphosphates as substrates, but this may not be physiologically important. Probably plays a role in initiation of 16S rRNA degradation (leading to ribosome degradation) during starvation. The protein is Ribonuclease PH of Cupriavidus necator (strain ATCC 17699 / DSM 428 / KCTC 22496 / NCIMB 10442 / H16 / Stanier 337) (Ralstonia eutropha).